Reading from the N-terminus, the 219-residue chain is UPF0173 metal-dependent hydrolase Mlab_1154 (219 aa).

It belongs to the UPF0173 family.

This Methanocorpusculum labreanum (strain ATCC 43576 / DSM 4855 / Z) protein is UPF0173 metal-dependent hydrolase Mlab_1154.